Here is a 220-residue protein sequence, read N- to C-terminus: Fructose-6-phosphate aldolase (220 aa).

Lys85 acts as the Schiff-base intermediate with substrate in catalysis.

This sequence belongs to the transaldolase family. Type 3A subfamily. Homodecamer.

Its subcellular location is the cytoplasm. It catalyses the reaction beta-D-fructose 6-phosphate = dihydroxyacetone + D-glyceraldehyde 3-phosphate. Catalyzes the reversible formation of fructose 6-phosphate from dihydroxyacetone and D-glyceraldehyde 3-phosphate via an aldolization reaction. The sequence is that of Fructose-6-phosphate aldolase from Salmonella arizonae (strain ATCC BAA-731 / CDC346-86 / RSK2980).